The sequence spans 269 residues: tRNA (guanine-N(7)-)-methyltransferase (269 aa).

Residues 1–38 form a disordered region; sequence MDGVNDAANHTVESVPGRPSTASAPLEAGRRSPTGSRL. Glu91, Glu116, Asp143, and Asp166 together coordinate S-adenosyl-L-methionine. Asp166 is a catalytic residue. Substrate-binding positions include Lys170, Asp202, and 247 to 250; that span reads TKFE.

It belongs to the class I-like SAM-binding methyltransferase superfamily. TrmB family.

The enzyme catalyses guanosine(46) in tRNA + S-adenosyl-L-methionine = N(7)-methylguanosine(46) in tRNA + S-adenosyl-L-homocysteine. It participates in tRNA modification; N(7)-methylguanine-tRNA biosynthesis. In terms of biological role, catalyzes the formation of N(7)-methylguanine at position 46 (m7G46) in tRNA. This Nocardia farcinica (strain IFM 10152) protein is tRNA (guanine-N(7)-)-methyltransferase.